The sequence spans 186 residues: Alkyl hydroperoxide reductase AhpD (186 aa).

C132 serves as the catalytic Proton donor. C132 and C135 form a disulfide bridge. C135 acts as the Cysteine sulfenic acid (-SOH) intermediate in catalysis.

This sequence belongs to the AhpD family.

The enzyme catalyses N(6)-[(R)-dihydrolipoyl]-L-lysyl-[lipoyl-carrier protein] + a hydroperoxide = N(6)-[(R)-lipoyl]-L-lysyl-[lipoyl-carrier protein] + an alcohol + H2O. Antioxidant protein with alkyl hydroperoxidase activity. Required for the reduction of the AhpC active site cysteine residues and for the regeneration of the AhpC enzyme activity. In Anaeromyxobacter dehalogenans (strain 2CP-C), this protein is Alkyl hydroperoxide reductase AhpD.